The chain runs to 883 residues: Alanine--tRNA ligase (883 aa).

The Zn(2+) site is built by His563, His567, Cys673, and His677.

This sequence belongs to the class-II aminoacyl-tRNA synthetase family. Zn(2+) serves as cofactor.

It localises to the cytoplasm. It catalyses the reaction tRNA(Ala) + L-alanine + ATP = L-alanyl-tRNA(Ala) + AMP + diphosphate. Its function is as follows. Catalyzes the attachment of alanine to tRNA(Ala) in a two-step reaction: alanine is first activated by ATP to form Ala-AMP and then transferred to the acceptor end of tRNA(Ala). Also edits incorrectly charged Ser-tRNA(Ala) and Gly-tRNA(Ala) via its editing domain. In Caulobacter sp. (strain K31), this protein is Alanine--tRNA ligase.